Reading from the N-terminus, the 130-residue chain is Small ribosomal subunit protein uS8 (130 aa).

This sequence belongs to the universal ribosomal protein uS8 family. Part of the 30S ribosomal subunit. Contacts proteins S5 and S12.

In terms of biological role, one of the primary rRNA binding proteins, it binds directly to 16S rRNA central domain where it helps coordinate assembly of the platform of the 30S subunit. The chain is Small ribosomal subunit protein uS8 from Buchnera aphidicola subsp. Acyrthosiphon kondoi (Acyrthosiphon kondoi symbiotic bacterium).